Reading from the N-terminus, the 257-residue chain is GTP cyclohydrolase FolE2 (257 aa).

Belongs to the GTP cyclohydrolase IV family.

It catalyses the reaction GTP + H2O = 7,8-dihydroneopterin 3'-triphosphate + formate + H(+). The protein operates within cofactor biosynthesis; 7,8-dihydroneopterin triphosphate biosynthesis; 7,8-dihydroneopterin triphosphate from GTP: step 1/1. Functionally, converts GTP to 7,8-dihydroneopterin triphosphate. The chain is GTP cyclohydrolase FolE2 from Kosmotoga olearia (strain ATCC BAA-1733 / DSM 21960 / TBF 19.5.1).